Here is a 422-residue protein sequence, read N- to C-terminus: Tyrosine--tRNA ligase (422 aa).

L-tyrosine is bound at residue Y36. The 'HIGH' region motif lies at 41-50 (PTADSLHIGH). L-tyrosine-binding residues include Y175 and Q179. Residues 235 to 239 (KFGKT) carry the 'KMSKS' region motif. An ATP-binding site is contributed by K238. In terms of domain architecture, S4 RNA-binding spans 354-411 (TSLQEALTKSKLATSRSQARYFIKSNAITINAHKQSKIEYIFQDSDRIYNLYTLLKRG).

Belongs to the class-I aminoacyl-tRNA synthetase family. TyrS type 1 subfamily. Homodimer.

The protein localises to the cytoplasm. The catalysed reaction is tRNA(Tyr) + L-tyrosine + ATP = L-tyrosyl-tRNA(Tyr) + AMP + diphosphate + H(+). Functionally, catalyzes the attachment of tyrosine to tRNA(Tyr) in a two-step reaction: tyrosine is first activated by ATP to form Tyr-AMP and then transferred to the acceptor end of tRNA(Tyr). This Blochmanniella floridana protein is Tyrosine--tRNA ligase.